The chain runs to 334 residues: Glycerol-3-phosphate dehydrogenase [NAD(P)+] (334 aa).

Residues serine 13, phenylalanine 14, and lysine 108 each coordinate NADPH. Residues lysine 108, glycine 137, and threonine 139 each coordinate sn-glycerol 3-phosphate. Alanine 141 contributes to the NADPH binding site. Sn-glycerol 3-phosphate is bound by residues lysine 193, aspartate 246, serine 256, arginine 257, and asparagine 258. The active-site Proton acceptor is lysine 193. Arginine 257 is an NADPH binding site. NADPH is bound by residues valine 281 and glutamate 283.

The protein belongs to the NAD-dependent glycerol-3-phosphate dehydrogenase family.

Its subcellular location is the cytoplasm. It catalyses the reaction sn-glycerol 3-phosphate + NAD(+) = dihydroxyacetone phosphate + NADH + H(+). It carries out the reaction sn-glycerol 3-phosphate + NADP(+) = dihydroxyacetone phosphate + NADPH + H(+). The protein operates within membrane lipid metabolism; glycerophospholipid metabolism. Functionally, catalyzes the reduction of the glycolytic intermediate dihydroxyacetone phosphate (DHAP) to sn-glycerol 3-phosphate (G3P), the key precursor for phospholipid synthesis. The sequence is that of Glycerol-3-phosphate dehydrogenase [NAD(P)+] from Bartonella tribocorum (strain CIP 105476 / IBS 506).